The following is a 131-amino-acid chain: Glycine cleavage system H protein (131 aa).

One can recognise a Lipoyl-binding domain in the interval 24–106; it reads RVTVGISDHA…YGEGWIFVVE (83 aa). Lysine 65 carries the post-translational modification N6-lipoyllysine.

Belongs to the GcvH family. As to quaternary structure, the glycine cleavage system is composed of four proteins: P, T, L and H. Requires (R)-lipoate as cofactor.

Functionally, the glycine cleavage system catalyzes the degradation of glycine. The H protein shuttles the methylamine group of glycine from the P protein to the T protein. In Xanthomonas oryzae pv. oryzae (strain MAFF 311018), this protein is Glycine cleavage system H protein.